We begin with the raw amino-acid sequence, 500 residues long: Aspartyl/glutamyl-tRNA(Asn/Gln) amidotransferase subunit B (500 aa).

Belongs to the GatB/GatE family. GatB subfamily. As to quaternary structure, heterotrimer of A, B and C subunits.

It carries out the reaction L-glutamyl-tRNA(Gln) + L-glutamine + ATP + H2O = L-glutaminyl-tRNA(Gln) + L-glutamate + ADP + phosphate + H(+). The catalysed reaction is L-aspartyl-tRNA(Asn) + L-glutamine + ATP + H2O = L-asparaginyl-tRNA(Asn) + L-glutamate + ADP + phosphate + 2 H(+). In terms of biological role, allows the formation of correctly charged Asn-tRNA(Asn) or Gln-tRNA(Gln) through the transamidation of misacylated Asp-tRNA(Asn) or Glu-tRNA(Gln) in organisms which lack either or both of asparaginyl-tRNA or glutaminyl-tRNA synthetases. The reaction takes place in the presence of glutamine and ATP through an activated phospho-Asp-tRNA(Asn) or phospho-Glu-tRNA(Gln). This chain is Aspartyl/glutamyl-tRNA(Asn/Gln) amidotransferase subunit B, found in Sinorhizobium medicae (strain WSM419) (Ensifer medicae).